Consider the following 201-residue polypeptide: 3-isopropylmalate dehydratase small subunit (201 aa).

This sequence belongs to the LeuD family. LeuD type 1 subfamily. As to quaternary structure, heterodimer of LeuC and LeuD.

It catalyses the reaction (2R,3S)-3-isopropylmalate = (2S)-2-isopropylmalate. It participates in amino-acid biosynthesis; L-leucine biosynthesis; L-leucine from 3-methyl-2-oxobutanoate: step 2/4. In terms of biological role, catalyzes the isomerization between 2-isopropylmalate and 3-isopropylmalate, via the formation of 2-isopropylmaleate. The polypeptide is 3-isopropylmalate dehydratase small subunit (Micrococcus luteus (strain ATCC 4698 / DSM 20030 / JCM 1464 / CCM 169 / CCUG 5858 / IAM 1056 / NBRC 3333 / NCIMB 9278 / NCTC 2665 / VKM Ac-2230) (Micrococcus lysodeikticus)).